A 312-amino-acid chain; its full sequence is Aspartate carbamoyltransferase catalytic subunit (312 aa).

Arg57 and Thr58 together coordinate carbamoyl phosphate. An L-aspartate-binding site is contributed by Lys85. Residues Arg107, His135, and Gln138 each contribute to the carbamoyl phosphate site. The L-aspartate site is built by Arg168 and Arg222. Residues Gly264 and Pro265 each contribute to the carbamoyl phosphate site.

It belongs to the aspartate/ornithine carbamoyltransferase superfamily. ATCase family. As to quaternary structure, heterododecamer (2C3:3R2) of six catalytic PyrB chains organized as two trimers (C3), and six regulatory PyrI chains organized as three dimers (R2).

The enzyme catalyses carbamoyl phosphate + L-aspartate = N-carbamoyl-L-aspartate + phosphate + H(+). It functions in the pathway pyrimidine metabolism; UMP biosynthesis via de novo pathway; (S)-dihydroorotate from bicarbonate: step 2/3. Its function is as follows. Catalyzes the condensation of carbamoyl phosphate and aspartate to form carbamoyl aspartate and inorganic phosphate, the committed step in the de novo pyrimidine nucleotide biosynthesis pathway. The chain is Aspartate carbamoyltransferase catalytic subunit from Carboxydothermus hydrogenoformans (strain ATCC BAA-161 / DSM 6008 / Z-2901).